A 271-amino-acid chain; its full sequence is Formamidopyrimidine-DNA glycosylase (271 aa).

The active-site Schiff-base intermediate with DNA is proline 2. Catalysis depends on glutamate 3, which acts as the Proton donor. Lysine 58 functions as the Proton donor; for beta-elimination activity in the catalytic mechanism. Histidine 91, arginine 110, and arginine 152 together coordinate DNA. The segment at 237 to 271 (LVYGREGQPCVHCGRPIRCETIGQRSSYFCTRCQR) adopts an FPG-type zinc-finger fold. Residue arginine 261 is the Proton donor; for delta-elimination activity of the active site.

This sequence belongs to the FPG family. Monomer. It depends on Zn(2+) as a cofactor.

The catalysed reaction is Hydrolysis of DNA containing ring-opened 7-methylguanine residues, releasing 2,6-diamino-4-hydroxy-5-(N-methyl)formamidopyrimidine.. It catalyses the reaction 2'-deoxyribonucleotide-(2'-deoxyribose 5'-phosphate)-2'-deoxyribonucleotide-DNA = a 3'-end 2'-deoxyribonucleotide-(2,3-dehydro-2,3-deoxyribose 5'-phosphate)-DNA + a 5'-end 5'-phospho-2'-deoxyribonucleoside-DNA + H(+). In terms of biological role, involved in base excision repair of DNA damaged by oxidation or by mutagenic agents. Acts as a DNA glycosylase that recognizes and removes damaged bases. Has a preference for oxidized purines, such as 7,8-dihydro-8-oxoguanine (8-oxoG). Has AP (apurinic/apyrimidinic) lyase activity and introduces nicks in the DNA strand. Cleaves the DNA backbone by beta-delta elimination to generate a single-strand break at the site of the removed base with both 3'- and 5'-phosphates. This chain is Formamidopyrimidine-DNA glycosylase, found in Syntrophotalea carbinolica (strain DSM 2380 / NBRC 103641 / GraBd1) (Pelobacter carbinolicus).